The sequence spans 565 residues: Urocanate hydratase (565 aa).

NAD(+)-binding positions include 58 to 59 (GG), Q136, 182 to 184 (GMG), E202, R207, 245 to 246 (NA), 266 to 270 (QTSAH), 276 to 277 (YL), and Y325. The active site involves C413. G495 lines the NAD(+) pocket.

Belongs to the urocanase family. The cofactor is NAD(+).

The protein localises to the cytoplasm. The catalysed reaction is 4-imidazolone-5-propanoate = trans-urocanate + H2O. Its pathway is amino-acid degradation; L-histidine degradation into L-glutamate; N-formimidoyl-L-glutamate from L-histidine: step 2/3. Catalyzes the conversion of urocanate to 4-imidazolone-5-propionate. The polypeptide is Urocanate hydratase (Vibrio vulnificus (strain YJ016)).